The sequence spans 258 residues: Short-chain dehydrogenase chyC (258 aa).

NADP(+) contacts are provided by Arg-37, Asp-55, Asn-81, Tyr-154, Lys-158, Val-185, and Thr-187. Tyr-154 (proton donor) is an active-site residue. Lys-158 functions as the Lowers pKa of active site Tyr in the catalytic mechanism.

It belongs to the short-chain dehydrogenases/reductases (SDR) family.

Short-chain dehydrogenase; part of the gene cluster that mediates the biosynthesis of the yellow pigment chrysogine. the NRPS chyA mediates the condensation of anthranilic acid and alanine into the intermediate 2-(2-aminopropanamido)benzoic acid. The remainder of the pathway is highly branched yielding at least 13 chrysogine-related compounds. The malonyl transferase chyE converts 2-(2-aminopropanamido)benzoic acid and 2-(2-aminopropanamido)benzamidine into 2-(2-(2-carboxyacetamido)propanamido)benzoic acid and 3-((1-((2-carbamoylphenyl)amino)-1-oxopropan-2-yl)amino)-3-oxopropanoic acid, respectively. ChyD is an amidase, being responsible for the amidation of the carboxylic acid moiety of 2-(2-aminopropanamido)benzoic acid, 2-(2-(2-carboxyacetamido)propanamido)benzoic acid and 2-(2-((4-amino-1-carboxy-4-oxobutyl)amino)propanamido)benzoic acid. ChyC is involved in the same reactions as ChyD, but plays a more minor role in the amidation reactions compared to chyD. The oxidoreductases chyH and chyM are involved in oxidation reactions that form N-pyruvoylanthranilamide from 2-(2-aminopropanamido)benzamidine and (1-((2-carbamoylphenyl)amino)-1-oxopropan-2-yl)glutamine, respectively. N-pyruvoylanthranilamide is further converted via two further branches in the pathway, yielding chrysogine and additional chrysogine-related coumpounds. Chrysogine is likely formed by a spontaneous ring closure from N-pyruvoylanthranilamide. This chain is Short-chain dehydrogenase chyC, found in Penicillium rubens (strain ATCC 28089 / DSM 1075 / NRRL 1951 / Wisconsin 54-1255) (Penicillium chrysogenum).